Reading from the N-terminus, the 1129-residue chain is Serine/threonine-protein kinase LATS1 (1129 aa).

The span at 1 to 11 (MKRGEKPEGYR) shows a compositional bias: basic and acidic residues. Positions 1-71 (MKRGEKPEGY…PRQVRNPPKF (71 aa)) are disordered. The segment covering 19–30 (PASNYPGSSRQM) has biased composition (polar residues). The span at 46-64 (DASKAEHNLNKMSTEDPRQ) shows a compositional bias: basic and acidic residues. The 42-residue stretch at 100–141 (EVNPQMFQDLQAAGFDEDMVIQALQKTNNRSIEAAVEFISKM) folds into the UBA domain. Disordered regions lie at residues 148–216 (REQM…RPLS) and 228–276 (PSNG…QTKR). Residues 235-268 (NPPPPPQVRSVTPPPPPRGQTPPPRGTTPPPPSW) show a composition bias toward pro residues. Phosphothreonine is present on T246. S278 bears the Phosphoserine mark. Disordered stretches follow at residues 292–317 (PPGA…SQAQ), 363–407 (PTGS…VPQS), 432–492 (WPQS…TPAP), and 513–630 (PTHP…ESRI). The segment covering 300–312 (YPPPPLTTSPMNP) has biased composition (pro residues). The PPxY motif 1 signature appears at 372–375 (PPPY). Residues 380–392 (ANGQSPSALQTGA) show a composition bias toward polar residues. Residues 433 to 445 (PQSSSAPAQSSPS) are compositionally biased toward low complexity. Polar residues predominate over residues 453-481 (WQPNIPVRSNSFNNPLGSRASHSANSQPS). S463 carries the post-translational modification Phosphoserine; by NUAK1 and NUAK2. 2 stretches are compositionally biased toward low complexity: residues 482-492 (ATTVTAITPAP) and 520-530 (PQPVQTVQPTP). The interaction with YAP1 stretch occupies residues 525–654 (TVQPTPFSEG…HVENVLKSHQ (130 aa)). The PPxY motif 2 signature appears at 555-558 (PPPY). A compositionally biased stretch (basic and acidic residues) spans 578-608 (PCKDEQPSLPKEDDSEKSADSGDSGDKEKKQ). S612 carries the phosphoserine modification. Over residues 620–629 (KKDEERRESR) the composition is skewed to basic and acidic residues. S673 carries the post-translational modification Phosphoserine. Residues 704–1009 (FVKIKTLGIG…ADEIKAHPFF (306 aa)) form the Protein kinase domain. ATP-binding positions include 710–718 (LGIGAFGEV) and K733. The Proton acceptor role is filled by D827. Position 908 is a phosphoserine; by STK3/MST2 (S908). Positions 1010–1089 (KTIDFSSDLR…RRFFDDNGYP (80 aa)) constitute an AGC-kinase C-terminal domain. T1078 carries the phosphothreonine; by STK3/MST2 modification. Residues 1104–1129 (QGSEQQSDEDDQHTSSDGNNRDLVYV) are disordered.

It belongs to the protein kinase superfamily. AGC Ser/Thr protein kinase family. In terms of assembly, complexes with CDK1 in early mitosis. LATS1-associated CDK1 has no mitotic cyclin partner and no apparent kinase activity. Binds phosphorylated ZYX, locating this protein to the mitotic spindle and suggesting a role for actin regulatory proteins during mitosis. Binds to and colocalizes with LIMK1 at the actomyosin contractile ring during cytokinesis. Interacts (via PPxY motif 2) with YAP1 (via WW domains). Interacts with MOB1A and MOB1B. Interacts with LIMD1, WTIP and AJUBA. Interacts with ESR1, DCAF1 and DCAF13; probably recruits DCAF1 and DCAF13 to ESR1 to promote ESR1 ubiquitination and ubiquitin-mediated proteasomal degradation. Interacts with STK3/MST2; this interaction is inhibited in the presence of DLG5. Interacts with SCRIB in the presence of DLG5. Interacts with WWTR1/TAZ. Interacts with WWC1, WWC2 and WWC3 (via their WW domains). The cofactor is Mg(2+). Post-translationally, autophosphorylated and phosphorylated during M-phase of the cell cycle. Phosphorylated by STK3/MST2 at Ser-908 and Thr-1078, which results in its activation. Phosphorylated by MAP4Ks; in parallel to STK3/MST2 and resulting to its activation. Phosphorylation at Ser-463 by NUAK1 and NUAK2 leads to decreased protein level and is required to regulate cellular senescence and cellular ploidy.

The protein resides in the cytoplasm. Its subcellular location is the cytoskeleton. The protein localises to the microtubule organizing center. It is found in the centrosome. It localises to the spindle. The protein resides in the midbody. Its subcellular location is the spindle pole body. The enzyme catalyses L-seryl-[protein] + ATP = O-phospho-L-seryl-[protein] + ADP + H(+). It catalyses the reaction L-threonyl-[protein] + ATP = O-phospho-L-threonyl-[protein] + ADP + H(+). In terms of biological role, negative regulator of YAP1 in the Hippo signaling pathway that plays a pivotal role in organ size control and tumor suppression by restricting proliferation and promoting apoptosis. The core of this pathway is composed of a kinase cascade wherein STK3/MST2 and STK4/MST1, in complex with its regulatory protein SAV1, phosphorylates and activates LATS1/2 in complex with its regulatory protein MOB1, which in turn phosphorylates and inactivates YAP1 oncoprotein and WWTR1/TAZ. Phosphorylation of YAP1 by LATS1 inhibits its translocation into the nucleus to regulate cellular genes important for cell proliferation, cell death, and cell migration. Acts as a tumor suppressor which plays a critical role in maintenance of ploidy through its actions in both mitotic progression and the G1 tetraploidy checkpoint. Negatively regulates G2/M transition by down-regulating CDK1 kinase activity. Involved in the control of p53 expression. Affects cytokinesis by regulating actin polymerization through negative modulation of LIMK1. May also play a role in endocrine function. Plays a role in mammary gland epithelial cell differentiation, both through the Hippo signaling pathway and the intracellular estrogen receptor signaling pathway by promoting the degradation of ESR1. Acts as an activator of the NLRP3 inflammasome by mediating phosphorylation of 'Ser-265' of NLRP3 following NLRP3 palmitoylation, promoting NLRP3 activation by NEK7. The polypeptide is Serine/threonine-protein kinase LATS1 (Mus musculus (Mouse)).